A 292-amino-acid polypeptide reads, in one-letter code: Formamidopyrimidine-DNA glycosylase (292 aa).

The Schiff-base intermediate with DNA role is filled by Pro-2. The active-site Proton donor is Glu-3. The active-site Proton donor; for beta-elimination activity is Lys-60. DNA-binding residues include His-109, Arg-128, and Arg-173. An FPG-type zinc finger spans residues Asn-258–Lys-292. Catalysis depends on Arg-282, which acts as the Proton donor; for delta-elimination activity.

Belongs to the FPG family. Monomer. Zn(2+) is required as a cofactor.

It carries out the reaction Hydrolysis of DNA containing ring-opened 7-methylguanine residues, releasing 2,6-diamino-4-hydroxy-5-(N-methyl)formamidopyrimidine.. The catalysed reaction is 2'-deoxyribonucleotide-(2'-deoxyribose 5'-phosphate)-2'-deoxyribonucleotide-DNA = a 3'-end 2'-deoxyribonucleotide-(2,3-dehydro-2,3-deoxyribose 5'-phosphate)-DNA + a 5'-end 5'-phospho-2'-deoxyribonucleoside-DNA + H(+). Its function is as follows. Involved in base excision repair of DNA damaged by oxidation or by mutagenic agents. Acts as a DNA glycosylase that recognizes and removes damaged bases. Has a preference for oxidized purines, such as 7,8-dihydro-8-oxoguanine (8-oxoG). Has AP (apurinic/apyrimidinic) lyase activity and introduces nicks in the DNA strand. Cleaves the DNA backbone by beta-delta elimination to generate a single-strand break at the site of the removed base with both 3'- and 5'-phosphates. The chain is Formamidopyrimidine-DNA glycosylase from Prochlorococcus marinus (strain MIT 9301).